Consider the following 382-residue polypeptide: D-galactonate dehydratase (382 aa).

D183 is a binding site for Mg(2+). The active-site Proton donor is H185. Residues E209 and E235 each coordinate Mg(2+). H285 (proton acceptor) is an active-site residue.

This sequence belongs to the mandelate racemase/muconate lactonizing enzyme family. GalD subfamily. Requires Mg(2+) as cofactor.

It catalyses the reaction D-galactonate = 2-dehydro-3-deoxy-D-galactonate + H2O. It participates in carbohydrate acid metabolism; D-galactonate degradation; D-glyceraldehyde 3-phosphate and pyruvate from D-galactonate: step 1/3. Functionally, catalyzes the dehydration of D-galactonate to 2-keto-3-deoxy-D-galactonate. The sequence is that of D-galactonate dehydratase from Escherichia coli (strain 55989 / EAEC).